The chain runs to 310 residues: tRNA dimethylallyltransferase (310 aa).

12–19 (GPTATGKT) lines the ATP pocket. 14 to 19 (TATGKT) contributes to the substrate binding site. The tract at residues 37–40 (DSMM) is interaction with substrate tRNA.

It belongs to the IPP transferase family. In terms of assembly, monomer. It depends on Mg(2+) as a cofactor.

The enzyme catalyses adenosine(37) in tRNA + dimethylallyl diphosphate = N(6)-dimethylallyladenosine(37) in tRNA + diphosphate. In terms of biological role, catalyzes the transfer of a dimethylallyl group onto the adenine at position 37 in tRNAs that read codons beginning with uridine, leading to the formation of N6-(dimethylallyl)adenosine (i(6)A). The polypeptide is tRNA dimethylallyltransferase (Desulforudis audaxviator (strain MP104C)).